The chain runs to 575 residues: Physarolisin (575 aa).

Residues Met1 to Ala18 form the signal peptide. Positions Val19–Gly173 are cleaved as a propeptide — removed in mature form. The region spanning Tyr179–Leu574 is the Peptidase S53 domain. Residue Asn200 is glycosylated (N-linked (GlcNAc...) asparagine). Residues Glu248 and Asp252 each act as charge relay system in the active site. 4 N-linked (GlcNAc...) asparagine glycosylation sites follow: Asn262, Asn307, Asn380, and Asn453. Ser484 functions as the Charge relay system in the catalytic mechanism. Ca(2+)-binding residues include Asp529, Ile530, Gly552, and Asp554.

It depends on Ca(2+) as a cofactor. In terms of processing, autocatalytically processed. Post-translationally, N-glycosylated.

The catalysed reaction is Milk clotting activity. Preferential cleavage of 8-Gly-|-Ser-9 in B chain of insulin most rapidly, followed by 11-Leu-|-Val-12, 19-Cys(SO(3)H)-|-Gly and 24-Phe-|-Phe-25. No action on Ac-Phe-Tyr(I)2.. Its activity is regulated as follows. Inhibited by diisopropylfluorophosphate (DFP) and diazoacetyl-D,L-norleucine methyl ester (DAN). This is Physarolisin from Physarum polycephalum (Slime mold).